A 349-amino-acid chain; its full sequence is Phosphoribosylformylglycinamidine cyclo-ligase (349 aa).

The protein belongs to the AIR synthase family.

It localises to the cytoplasm. It catalyses the reaction 2-formamido-N(1)-(5-O-phospho-beta-D-ribosyl)acetamidine + ATP = 5-amino-1-(5-phospho-beta-D-ribosyl)imidazole + ADP + phosphate + H(+). It functions in the pathway purine metabolism; IMP biosynthesis via de novo pathway; 5-amino-1-(5-phospho-D-ribosyl)imidazole from N(2)-formyl-N(1)-(5-phospho-D-ribosyl)glycinamide: step 2/2. The protein is Phosphoribosylformylglycinamidine cyclo-ligase of Methanococcus vannielii (strain ATCC 35089 / DSM 1224 / JCM 13029 / OCM 148 / SB).